A 368-amino-acid polypeptide reads, in one-letter code: 1-deoxy-D-xylulose 5-phosphate reductoisomerase (368 aa).

The NADPH site is built by Thr-10, Gly-11, Ser-12, Ile-13, Gln-38, and Asn-100. Lys-101 is a 1-deoxy-D-xylulose 5-phosphate binding site. Glu-102 contributes to the NADPH binding site. A Mn(2+)-binding site is contributed by Asp-125. 1-deoxy-D-xylulose 5-phosphate-binding residues include Ser-126, Glu-127, Ser-151, and His-172. Glu-127 lines the Mn(2+) pocket. Gly-178 is a binding site for NADPH. 1-deoxy-D-xylulose 5-phosphate-binding residues include Ser-185, Asn-190, Lys-191, and Glu-194. Glu-194 is a Mn(2+) binding site.

The protein belongs to the DXR family. The cofactor is Mg(2+). Mn(2+) is required as a cofactor.

It carries out the reaction 2-C-methyl-D-erythritol 4-phosphate + NADP(+) = 1-deoxy-D-xylulose 5-phosphate + NADPH + H(+). It functions in the pathway isoprenoid biosynthesis; isopentenyl diphosphate biosynthesis via DXP pathway; isopentenyl diphosphate from 1-deoxy-D-xylulose 5-phosphate: step 1/6. Functionally, catalyzes the NADPH-dependent rearrangement and reduction of 1-deoxy-D-xylulose-5-phosphate (DXP) to 2-C-methyl-D-erythritol 4-phosphate (MEP). The polypeptide is 1-deoxy-D-xylulose 5-phosphate reductoisomerase (Tropheryma whipplei (strain Twist) (Whipple's bacillus)).